The sequence spans 287 residues: Phosphatidylserine decarboxylase proenzyme (287 aa).

Residues D89, H146, and S252 each act as charge relay system; for autoendoproteolytic cleavage activity in the active site. The active-site Schiff-base intermediate with substrate; via pyruvic acid; for decarboxylase activity is the S252. S252 is subject to Pyruvic acid (Ser); by autocatalysis.

The protein belongs to the phosphatidylserine decarboxylase family. PSD-B subfamily. Prokaryotic type I sub-subfamily. In terms of assembly, heterodimer of a large membrane-associated beta subunit and a small pyruvoyl-containing alpha subunit. Pyruvate is required as a cofactor. In terms of processing, is synthesized initially as an inactive proenzyme. Formation of the active enzyme involves a self-maturation process in which the active site pyruvoyl group is generated from an internal serine residue via an autocatalytic post-translational modification. Two non-identical subunits are generated from the proenzyme in this reaction, and the pyruvate is formed at the N-terminus of the alpha chain, which is derived from the carboxyl end of the proenzyme. The autoendoproteolytic cleavage occurs by a canonical serine protease mechanism, in which the side chain hydroxyl group of the serine supplies its oxygen atom to form the C-terminus of the beta chain, while the remainder of the serine residue undergoes an oxidative deamination to produce ammonia and the pyruvoyl prosthetic group on the alpha chain. During this reaction, the Ser that is part of the protease active site of the proenzyme becomes the pyruvoyl prosthetic group, which constitutes an essential element of the active site of the mature decarboxylase.

The protein resides in the cell membrane. The enzyme catalyses a 1,2-diacyl-sn-glycero-3-phospho-L-serine + H(+) = a 1,2-diacyl-sn-glycero-3-phosphoethanolamine + CO2. It functions in the pathway phospholipid metabolism; phosphatidylethanolamine biosynthesis; phosphatidylethanolamine from CDP-diacylglycerol: step 2/2. Its function is as follows. Catalyzes the formation of phosphatidylethanolamine (PtdEtn) from phosphatidylserine (PtdSer). This is Phosphatidylserine decarboxylase proenzyme from Shewanella woodyi (strain ATCC 51908 / MS32).